Consider the following 184-residue polypeptide: Photosystem I assembly protein Ycf4 (184 aa).

The next 2 helical transmembrane spans lie at 19–39 and 57–77; these read ISNFCWAFILFLGSLGFLLVG and IVFFPQGIVMSFYGIAGLFIS.

This sequence belongs to the Ycf4 family.

The protein resides in the plastid. The protein localises to the chloroplast thylakoid membrane. Its function is as follows. Seems to be required for the assembly of the photosystem I complex. The sequence is that of Photosystem I assembly protein Ycf4 from Nicotiana tomentosiformis (Tobacco).